An 810-amino-acid polypeptide reads, in one-letter code: Glycerol-3-phosphate acyltransferase (810 aa).

The short motif at 305-310 is the HXXXXD motif element; the sequence is CHRSHI.

The protein belongs to the GPAT/DAPAT family.

It is found in the cell inner membrane. The catalysed reaction is sn-glycerol 3-phosphate + an acyl-CoA = a 1-acyl-sn-glycero-3-phosphate + CoA. The protein operates within phospholipid metabolism; CDP-diacylglycerol biosynthesis; CDP-diacylglycerol from sn-glycerol 3-phosphate: step 1/3. This Haemophilus influenzae (strain PittEE) protein is Glycerol-3-phosphate acyltransferase.